The chain runs to 608 residues: Kinetochore protein NUF2 (608 aa).

The tract at residues 121–125 is required for nuclear localization and function; sequence IGNLR. Coiled coils occupy residues 176–319 and 358–460; these read FESQ…QQKL and REKL…IEEE.

The protein belongs to the NUF2 family.

It localises to the chromosome. Its subcellular location is the centromere. The protein localises to the kinetochore. Required for anchoring centrosomal cores to the nuclear periphery. Plays a role in chromosome segregation but is dispensable for centromere clustering. The sequence is that of Kinetochore protein NUF2 from Toxoplasma gondii (strain ATCC 50611 / Me49).